The chain runs to 86 residues: Co-chaperonin GroES (86 aa).

This sequence belongs to the GroES chaperonin family. In terms of assembly, heptamer of 7 subunits arranged in a ring. Interacts with the chaperonin GroEL.

It localises to the cytoplasm. Functionally, together with the chaperonin GroEL, plays an essential role in assisting protein folding. The GroEL-GroES system forms a nano-cage that allows encapsulation of the non-native substrate proteins and provides a physical environment optimized to promote and accelerate protein folding. GroES binds to the apical surface of the GroEL ring, thereby capping the opening of the GroEL channel. This is Co-chaperonin GroES from Campylobacter curvus (strain 525.92).